A 340-amino-acid polypeptide reads, in one-letter code: Selenide, water dikinase (340 aa).

Sec17 is an active-site residue. A non-standard amino acid (selenocysteine) is located at residue Sec17. Residues Lys20 and 45 to 47 (NNE) each bind ATP. Asp48 is a Mg(2+) binding site. Residues Asp65, Asp88, and 136–138 (GHT) contribute to the ATP site. Asp88 contributes to the Mg(2+) binding site. Asp224 contributes to the Mg(2+) binding site.

Belongs to the selenophosphate synthase 1 family. Class I subfamily. As to quaternary structure, homodimer. The cofactor is Mg(2+).

The enzyme catalyses hydrogenselenide + ATP + H2O = selenophosphate + AMP + phosphate + 2 H(+). Its function is as follows. Synthesizes selenophosphate from selenide and ATP. In Campylobacter jejuni (strain RM1221), this protein is Selenide, water dikinase.